The primary structure comprises 138 residues: Large ribosomal subunit protein uL16 (138 aa).

Residues 1-17 (MLIPRKVKHRKQHHPRQ) show a composition bias toward basic residues. The disordered stretch occupies residues 1–22 (MLIPRKVKHRKQHHPRQRGIAS).

It belongs to the universal ribosomal protein uL16 family. In terms of assembly, part of the 50S ribosomal subunit.

Binds 23S rRNA and is also seen to make contacts with the A and possibly P site tRNAs. The chain is Large ribosomal subunit protein uL16 from Mycobacterium leprae (strain Br4923).